The chain runs to 886 residues: UPF0592 membrane protein C7D4.03c (886 aa).

The disordered stretch occupies residues 87 to 112; that stretch reads ILNEPYNESPSSSSSDSSSRSTSPFS. Over residues 95–112 the composition is skewed to low complexity; sequence SPSSSSSDSSSRSTSPFS. The next 3 helical transmembrane spans lie at 277–297, 374–394, and 400–420; these read FCAS…DHFL, GGFF…QFSF, and VIYF…LTIS.

The protein belongs to the UPF0592 family.

Its subcellular location is the membrane. The sequence is that of UPF0592 membrane protein C7D4.03c from Schizosaccharomyces pombe (strain 972 / ATCC 24843) (Fission yeast).